Reading from the N-terminus, the 87-residue chain is Sec-independent protein translocase protein TatA (87 aa).

The chain crosses the membrane as a helical span at residues 3–23; it reads IFGIGLPEMIVILVVALLIFG. Residues 61-87 form a disordered region; that stretch reads EGVKVSTSASEPEKVVDVSSATNTNKN.

It belongs to the TatA/E family. As to quaternary structure, forms a complex with TatC.

It localises to the cell inner membrane. Part of the twin-arginine translocation (Tat) system that transports large folded proteins containing a characteristic twin-arginine motif in their signal peptide across membranes. TatA could form the protein-conducting channel of the Tat system. The chain is Sec-independent protein translocase protein TatA from Trichodesmium erythraeum (strain IMS101).